Consider the following 470-residue polypeptide: Cupincin (470 aa).

A signal peptide spans 1-34 (MAKKKTSSSMARSQLAALLISLCFLSLASNAVGW). Residues 36-52 (RRGEREEEDERRRHGGE) are compositionally biased toward basic and acidic residues. 2 disordered regions span residues 36-57 (RRGE…GRPY) and 240-261 (KSCS…PSSL). Cupin type-1 domains are found at residues 57–215 (YHFG…EELE) and 259–445 (SSLT…AREA). A glycan (N-linked (GlcNAc...) asparagine) is linked at Asn297. The segment at 330–368 (PHVSGGGSSERREREREHGRRREEEQGEEEHGERGEKAR) is disordered. The segment covering 338–367 (SERREREREHGRRREEEQGEEEHGERGEKA) has biased composition (basic and acidic residues). Residues His347, Glu352, and His360 each coordinate Zn(2+).

It belongs to the 7S seed storage protein family. Homotrimer. Zn(2+) is required as a cofactor.

It localises to the secreted. Seed storage protein. Globulin-like protein that acts as a zinc metalloprotease. Cleaves specifically between Leu-15 and Tyr-16 of insulin B chain, and Gln-1 and Leu-2 of neurotensin (NT) peptide in vitro. May play a role as an initiating endopeptidase in germinating seeds. This chain is Cupincin, found in Oryza sativa subsp. indica (Rice).